The sequence spans 110 residues: uncharacterized protein (110 aa).

This sequence belongs to the HesB/IscA family.

This is an uncharacterized protein from Rickettsia prowazekii (strain Madrid E).